The chain runs to 288 residues: Ankyrin repeat and SOCS box protein 8 (288 aa).

Position 17 is a phosphoserine (Ser17). ANK repeat units lie at residues 52–81 (GTLKPLHCACMVSDADCVELLLEKGAEVNA), 85–113 (YNRTALHYAAERDEACVEVLLEYGANPNA), 117–146 (NRDTPLHWAAFKNNAECVRALLESGASVNA), and 150–179 (NNDTPLSWAAMKGNLESVSILLDYGAEVRV). The 54-residue stretch at 235-288 (QLCEKLTVLCSAPGTLKTLARYAVRRSLGLQYLPDAVKGLPLPVSLKDYLLLLE) folds into the SOCS box domain.

Belongs to the ankyrin SOCS box (ASB) family. In terms of assembly, interacts with TBK1; this interaction promotes TBK1 proteasomal degradation. In terms of processing, phosphorylated by TBK1.

It is found in the cytoplasm. The protein operates within protein modification; protein ubiquitination. May be a substrate-recognition component of a SCF-like ECS (Elongin-Cullin-SOCS-box protein) E3 ubiquitin-protein ligase complex which mediates the ubiquitination and subsequent proteasomal degradation of target proteins. Inhibits IFN-beta production through the IRF3 signaling pathway by targeting TBK1 via 'Lys-48'-linked ubiquitination, leading to its proteasomal degradation. This Mus musculus (Mouse) protein is Ankyrin repeat and SOCS box protein 8 (Asb8).